We begin with the raw amino-acid sequence, 37 residues long: Kunitz-type proteinase inhibitor AEPI-IV (37 aa).

Residues 6–37 form the BPTI/Kunitz inhibitor domain; sequence CQLPAVVGRCRGRFPRYYYNTEAGKCQRFIYG.

The protein belongs to the venom Kunitz-type family. Sea anemone type 2 potassium channel toxin subfamily.

Its subcellular location is the secreted. The protein localises to the nematocyst. In terms of biological role, dual-function toxin that inhibits both the serine protease trypsin and voltage-gated potassium channels (Kv). The sequence is that of Kunitz-type proteinase inhibitor AEPI-IV from Actinia equina (Beadlet anemone).